The sequence spans 352 residues: Biotin synthase (352 aa).

In terms of domain architecture, Radical SAM core spans N44–K262. Residues C59, C63, and C66 each coordinate [4Fe-4S] cluster. [2Fe-2S] cluster-binding residues include C103, C134, C194, and R266.

The protein belongs to the radical SAM superfamily. Biotin synthase family. Homodimer. It depends on [4Fe-4S] cluster as a cofactor. The cofactor is [2Fe-2S] cluster.

It catalyses the reaction (4R,5S)-dethiobiotin + (sulfur carrier)-SH + 2 reduced [2Fe-2S]-[ferredoxin] + 2 S-adenosyl-L-methionine = (sulfur carrier)-H + biotin + 2 5'-deoxyadenosine + 2 L-methionine + 2 oxidized [2Fe-2S]-[ferredoxin]. The protein operates within cofactor biosynthesis; biotin biosynthesis; biotin from 7,8-diaminononanoate: step 2/2. Functionally, catalyzes the conversion of dethiobiotin (DTB) to biotin by the insertion of a sulfur atom into dethiobiotin via a radical-based mechanism. The chain is Biotin synthase from Pseudomonas paraeruginosa (strain DSM 24068 / PA7) (Pseudomonas aeruginosa (strain PA7)).